The chain runs to 329 residues: GMP reductase (329 aa).

Catalysis depends on Cys-178, which acts as the Thioimidate intermediate. Position 207–230 (207–230 (VIADGGIRTHGDVAKSIRMGATMV)) interacts with NADP(+).

The protein belongs to the IMPDH/GMPR family. GuaC type 2 subfamily.

The enzyme catalyses IMP + NH4(+) + NADP(+) = GMP + NADPH + 2 H(+). In terms of biological role, catalyzes the irreversible NADPH-dependent deamination of GMP to IMP. It functions in the conversion of nucleobase, nucleoside and nucleotide derivatives of G to A nucleotides, and in maintaining the intracellular balance of A and G nucleotides. This is GMP reductase from Lactococcus lactis subsp. cremoris (strain MG1363).